Reading from the N-terminus, the 200-residue chain is Holliday junction resolvase RecU (200 aa).

Mg(2+)-binding residues include threonine 82, aspartate 84, glutamate 97, and glutamine 116.

The protein belongs to the RecU family. Mg(2+) serves as cofactor.

The protein resides in the cytoplasm. The enzyme catalyses Endonucleolytic cleavage at a junction such as a reciprocal single-stranded crossover between two homologous DNA duplexes (Holliday junction).. In terms of biological role, endonuclease that resolves Holliday junction intermediates in genetic recombination. Cleaves mobile four-strand junctions by introducing symmetrical nicks in paired strands. Promotes annealing of linear ssDNA with homologous dsDNA. Required for DNA repair, homologous recombination and chromosome segregation. This is Holliday junction resolvase RecU from Streptococcus sanguinis (strain SK36).